A 503-amino-acid polypeptide reads, in one-letter code: MEFSVKSGSPEKQRSACIVVGVFEPRRLSPIAEQLDKISDGYISALLRRGELEGKPGQTLLLHHVPNVLSERILLIGCGKERELDERQYKQVIQKTINTLNDTGSMEAVCFLTELHVKGRNNYWKVRQAVETAKETLYSFDQLKTNKSEPRRPLRKMVFNVPTRRELTSGERAIQHGLAIAAGIKAAKDLGNMPPNICNAAYLASQARQLADSYSKNVITRVIGEQQMRELGMNAYLAVGHGSQNESLMSVIEYKGNPSEDARPIVLVGKGLTFDSGGISIKPSEGMDEMKYDMCGAAAVYGVMRMVAELKLPINVIGVLAGCENMPGGRAYRPGDVLTTMSDQTVEVLNTDAEGRLVLCDVLTYVERFEPEAVIDVATLTGACVIALGHHITGLMSNHNPLAHELIGASEQAGDRAWRLPLGDEFQEQLESNFADMANIGGRPGGAITAGCFLSRFTRKYNWAHLDIAGTAWRSGKAKGATGRPVALLSQFLLNRAGFNGEE.

Residues Lys270 and Asp275 each contribute to the Mn(2+) site. Lys282 is an active-site residue. Residues Asp293, Asp352, and Glu354 each coordinate Mn(2+). The active site involves Arg356.

Belongs to the peptidase M17 family. It depends on Mn(2+) as a cofactor.

It is found in the cytoplasm. It carries out the reaction Release of an N-terminal amino acid, Xaa-|-Yaa-, in which Xaa is preferably Leu, but may be other amino acids including Pro although not Arg or Lys, and Yaa may be Pro. Amino acid amides and methyl esters are also readily hydrolyzed, but rates on arylamides are exceedingly low.. The catalysed reaction is Release of an N-terminal amino acid, preferentially leucine, but not glutamic or aspartic acids.. Presumably involved in the processing and regular turnover of intracellular proteins. Catalyzes the removal of unsubstituted N-terminal amino acids from various peptides. The chain is Probable cytosol aminopeptidase from Salmonella typhi.